The primary structure comprises 203 residues: Outer-membrane lipoprotein LolB (203 aa).

The first 17 residues, 1–17 (MNRLFRLLPLASLVLTA), serve as a signal peptide directing secretion. Residue Cys18 is the site of N-palmitoyl cysteine attachment. The S-diacylglycerol cysteine moiety is linked to residue Cys18.

The protein belongs to the LolB family. Monomer.

It is found in the cell outer membrane. In terms of biological role, plays a critical role in the incorporation of lipoproteins in the outer membrane after they are released by the LolA protein. The sequence is that of Outer-membrane lipoprotein LolB from Klebsiella pneumoniae subsp. pneumoniae (strain ATCC 700721 / MGH 78578).